The primary structure comprises 238 residues: Envelope glycoprotein G (238 aa).

The signal sequence occupies residues Met1 to Gly24. Over Val25–Asp189 the chain is Virion surface. N-linked (GlcNAc...) asparagine; by host glycans are attached at residues Asn28 and Asn49. Polar residues-rich tracts occupy residues Asn28 to Arg42 and Asn49 to Asp68. Positions Asn28–Pro171 are disordered. Residues Leu78–Gly88 are compositionally biased toward acidic residues. Residues Asp89–Arg100 are compositionally biased toward basic and acidic residues. The helical transmembrane segment at Thr190 to Ala210 threads the bilayer. Residues Thr211–Gly238 lie on the Intravirion side of the membrane.

It belongs to the alphaherpesvirinae glycoprotein G family.

It is found in the virion membrane. Functionally, chemokine-binding protein that inhibits neutrophils' chemotaxis. The chain is Envelope glycoprotein G (gG) from Human herpesvirus 1 (strain 17) (HHV-1).